Reading from the N-terminus, the 303-residue chain is Mesenteric estrogen-dependent adipogenesis protein (303 aa).

The protein resides in the cytoplasm. Functionally, involved in processes that promote adipocyte differentiation, lipid accumulation, and glucose uptake in mature adipocytes. The sequence is that of Mesenteric estrogen-dependent adipogenesis protein (MEDAG) from Bos taurus (Bovine).